A 349-amino-acid polypeptide reads, in one-letter code: Hydroxymethylglutaryl-CoA synthase (349 aa).

The (3S)-3-hydroxy-3-methylglutaryl-CoA site is built by aspartate 29 and alanine 30. The active-site Proton donor/acceptor is glutamate 81. (3S)-3-hydroxy-3-methylglutaryl-CoA contacts are provided by cysteine 113, threonine 154, threonine 202, and histidine 235. Cysteine 113 serves as the catalytic Acyl-thioester intermediate. Histidine 235 (proton donor/acceptor) is an active-site residue. Position 240 (arginine 240) interacts with CoA. Positions 244, 267, and 297 each coordinate (3S)-3-hydroxy-3-methylglutaryl-CoA.

Belongs to the thiolase-like superfamily. Archaeal HMG-CoA synthase family. In terms of assembly, interacts with acetoacetyl-CoA thiolase that catalyzes the precedent step in the pathway and with a DUF35 protein. The acetoacetyl-CoA thiolase/HMG-CoA synthase complex channels the intermediate via a fused CoA-binding site, which allows for efficient coupling of the endergonic thiolase reaction with the exergonic HMGCS reaction.

The enzyme catalyses acetoacetyl-CoA + acetyl-CoA + H2O = (3S)-3-hydroxy-3-methylglutaryl-CoA + CoA + H(+). It participates in metabolic intermediate biosynthesis; (R)-mevalonate biosynthesis; (R)-mevalonate from acetyl-CoA: step 2/3. Its function is as follows. Catalyzes the condensation of acetyl-CoA with acetoacetyl-CoA to form 3-hydroxy-3-methylglutaryl-CoA (HMG-CoA). Functions in the mevalonate (MVA) pathway leading to isopentenyl diphosphate (IPP), a key precursor for the biosynthesis of isoprenoid compounds that are building blocks of archaeal membrane lipids. This Caldivirga maquilingensis (strain ATCC 700844 / DSM 13496 / JCM 10307 / IC-167) protein is Hydroxymethylglutaryl-CoA synthase.